A 328-amino-acid polypeptide reads, in one-letter code: 4-hydroxy-3-methylbut-2-enyl diphosphate reductase (328 aa).

Cys24 contacts [4Fe-4S] cluster. (2E)-4-hydroxy-3-methylbut-2-enyl diphosphate-binding residues include His55 and His88. Residues His55 and His88 each contribute to the dimethylallyl diphosphate site. Isopentenyl diphosphate contacts are provided by His55 and His88. Residue Cys110 coordinates [4Fe-4S] cluster. His138 serves as a coordination point for (2E)-4-hydroxy-3-methylbut-2-enyl diphosphate. His138 is a binding site for dimethylallyl diphosphate. Position 138 (His138) interacts with isopentenyl diphosphate. Residue Glu140 is the Proton donor of the active site. Thr178 is a binding site for (2E)-4-hydroxy-3-methylbut-2-enyl diphosphate. A [4Fe-4S] cluster-binding site is contributed by Cys208. Residues Ser236, Ser237, Asn238, and Ser279 each coordinate (2E)-4-hydroxy-3-methylbut-2-enyl diphosphate. Dimethylallyl diphosphate-binding residues include Ser236, Ser237, Asn238, and Ser279. Residues Ser236, Ser237, Asn238, and Ser279 each contribute to the isopentenyl diphosphate site.

The protein belongs to the IspH family. Requires [4Fe-4S] cluster as cofactor.

It carries out the reaction isopentenyl diphosphate + 2 oxidized [2Fe-2S]-[ferredoxin] + H2O = (2E)-4-hydroxy-3-methylbut-2-enyl diphosphate + 2 reduced [2Fe-2S]-[ferredoxin] + 2 H(+). The catalysed reaction is dimethylallyl diphosphate + 2 oxidized [2Fe-2S]-[ferredoxin] + H2O = (2E)-4-hydroxy-3-methylbut-2-enyl diphosphate + 2 reduced [2Fe-2S]-[ferredoxin] + 2 H(+). Its pathway is isoprenoid biosynthesis; dimethylallyl diphosphate biosynthesis; dimethylallyl diphosphate from (2E)-4-hydroxy-3-methylbutenyl diphosphate: step 1/1. The protein operates within isoprenoid biosynthesis; isopentenyl diphosphate biosynthesis via DXP pathway; isopentenyl diphosphate from 1-deoxy-D-xylulose 5-phosphate: step 6/6. In terms of biological role, catalyzes the conversion of 1-hydroxy-2-methyl-2-(E)-butenyl 4-diphosphate (HMBPP) into a mixture of isopentenyl diphosphate (IPP) and dimethylallyl diphosphate (DMAPP). Acts in the terminal step of the DOXP/MEP pathway for isoprenoid precursor biosynthesis. This Ehrlichia ruminantium (strain Welgevonden) protein is 4-hydroxy-3-methylbut-2-enyl diphosphate reductase.